We begin with the raw amino-acid sequence, 414 residues long: MPKYELQETLASGSTSKVKRAAAPGNAKCVVKVIRKKDVPLRVFLREVKIHRSLRHPNIVGFVDSYEDCHGYCIVMKLGCGEVGSMIRAGGGLDPLLAHFYFRQLVSAVEYLHGKCICHRDIKPENMLIDSAGNLLLSDFGFSTVFFHKGRRRRLRSPAGSLEYMAPEVFEGAYDGELADVWSCGVSLVVFLTGALPWDRAVESDERFSAFVSSRGGCQVPLSSIGDQAMGLVMRMTAKEDRRPSVSTVMKDPWVMQPNELLDESGLCRDSCRLFSLVPRQTGSALHFTQPGEVHKTPRTRPVSSQPRRAGSGDICRVYIGEESLRLALRRVCEALDGMVVSHRIAKEHVMFSTVDSRRSVLSGEVGVIRLDEGCCMTIRRAKGDPQEFKRFTRVLAESLGCNGRKCTILYNEI.

In terms of domain architecture, Protein kinase spans 4 to 255 (YELQETLASG…VSTVMKDPWV (252 aa)). Residues 10–18 (LASGSTSKV) and K32 contribute to the ATP site. D121 acts as the Proton acceptor in catalysis. Residues 291–310 (PGEVHKTPRTRPVSSQPRRA) are disordered.

Belongs to the protein kinase superfamily. CAMK Ser/Thr protein kinase family. NIM1 subfamily.

Its subcellular location is the nucleus. The enzyme catalyses L-seryl-[protein] + ATP = O-phospho-L-seryl-[protein] + ADP + H(+). It carries out the reaction L-threonyl-[protein] + ATP = O-phospho-L-threonyl-[protein] + ADP + H(+). In terms of biological role, serine/threonine-protein kinase which is required for checkpoint-mediated cell cycle arrest and activation of DNA repair in response to the presence of DNA damage or unreplicated DNA. May also negatively regulate cell cycle progression during unperturbed cell cycles. This is Probable serine/threonine-protein kinase CHK1 homolog (CHK1) from Encephalitozoon cuniculi (strain GB-M1) (Microsporidian parasite).